The primary structure comprises 259 residues: Small ribosomal subunit protein uS2 (259 aa).

The protein belongs to the universal ribosomal protein uS2 family.

The chain is Small ribosomal subunit protein uS2 from Streptococcus pneumoniae serotype 2 (strain D39 / NCTC 7466).